Here is a 665-residue protein sequence, read N- to C-terminus: Phenol hydroxylase (665 aa).

FAD-binding positions include 18 to 19 (PA), 43 to 45 (DKR), 51 to 56 (NGQADG), Gln-118, Tyr-290, Asp-358, and 368 to 372 (GQGMN). Asp-55 lines the substrate pocket. Tyr-290 contributes to the substrate binding site.

It belongs to the PheA/TfdB FAD monooxygenase family. Homodimer. Requires FAD as cofactor.

The catalysed reaction is phenol + NADPH + O2 + H(+) = catechol + NADP(+) + H2O. It participates in aromatic compound metabolism; phenol degradation. With respect to regulation, inhibited by excess phenol. Heavy metals such AsCuSO(4), AgNO(3), or HgCl(2) severely inhibit activity. Hydroxylates phenol to catechol. Phenol is the best substrate, but the enzyme also accepts isomeric diphenols, hydroxyl-, amino-, halogen- or methyl-substituted phenols and, to a lesser degree, cresols. The sequence is that of Phenol hydroxylase from Cutaneotrichosporon cutaneum (Yeast).